The following is a 95-amino-acid chain: MSLSGFEFSSIIAVLLLLIQLSSAAVLPVDYASQYGVASADEMTALPEEGSLFAERPAKRAQTFVRFGKRAQTFVRFGKRGQTFVRFGRSAPFEQ.

The N-terminal stretch at 1-24 (MSLSGFEFSSIIAVLLLLIQLSSA) is a signal peptide. A propeptide spanning residues 25–58 (AVLPVDYASQYGVASADEMTALPEEGSLFAERPA) is cleaved from the precursor. Phenylalanine amide occurs at positions 67, 77, and 87. The propeptide occupies 90–95 (SAPFEQ).

The protein belongs to the FARP (FMRFamide related peptide) family.

The protein resides in the secreted. FMRFamides and FMRFamide-like peptides are neuropeptides. AQTFVRF-amide inhibits the activity of dissected pharyngeal myogenic muscle system. The chain is FMRFamide-like neuropeptides 16 (flp-16) from Caenorhabditis briggsae.